We begin with the raw amino-acid sequence, 203 residues long: Peptidyl-tRNA hydrolase (203 aa).

Residue Y18 coordinates tRNA. H23 functions as the Proton acceptor in the catalytic mechanism. Residues F69, N71, and N117 each coordinate tRNA.

It belongs to the PTH family. As to quaternary structure, monomer.

Its subcellular location is the cytoplasm. The enzyme catalyses an N-acyl-L-alpha-aminoacyl-tRNA + H2O = an N-acyl-L-amino acid + a tRNA + H(+). Functionally, hydrolyzes ribosome-free peptidyl-tRNAs (with 1 or more amino acids incorporated), which drop off the ribosome during protein synthesis, or as a result of ribosome stalling. In terms of biological role, catalyzes the release of premature peptidyl moieties from peptidyl-tRNA molecules trapped in stalled 50S ribosomal subunits, and thus maintains levels of free tRNAs and 50S ribosomes. This Prochlorococcus marinus subsp. pastoris (strain CCMP1986 / NIES-2087 / MED4) protein is Peptidyl-tRNA hydrolase.